Consider the following 468-residue polypeptide: uncharacterized protein (468 aa).

The next 12 helical transmembrane spans lie at Leu13–Phe33, Leu40–Leu60, Ala76–Ile96, Leu112–Gly132, Phe141–Ala161, Leu194–Leu214, Val237–Thr257, Pro260–Gln280, Cys328–Ile348, Phe354–Gly374, Ile414–Val434, and Ala443–Ile463.

Belongs to the NhaC Na(+)/H(+) (TC 2.A.35) antiporter family.

The protein resides in the cell membrane. This is an uncharacterized protein from Haemophilus influenzae (strain ATCC 51907 / DSM 11121 / KW20 / Rd).